Consider the following 468-residue polypeptide: Siroheme synthase (468 aa).

The tract at residues 1–202 (MDYLPLFARL…EQHDSAEQWM (202 aa)) is precorrin-2 dehydrogenase /sirohydrochlorin ferrochelatase. Residues 22–23 (DI) and 43–44 (PS) each bind NAD(+). Position 126 is a phosphoserine (S126). Residues 214–468 (GEIVLVGAGP…SGKEHLINLA (255 aa)) are uroporphyrinogen-III C-methyltransferase. P223 contacts S-adenosyl-L-methionine. Catalysis depends on D246, which acts as the Proton acceptor. Residue K268 is the Proton donor of the active site. Residues 299–301 (GGD), 329–330 (TA), M381, and G410 each bind S-adenosyl-L-methionine.

It in the N-terminal section; belongs to the precorrin-2 dehydrogenase / sirohydrochlorin ferrochelatase family. This sequence in the C-terminal section; belongs to the precorrin methyltransferase family.

The catalysed reaction is uroporphyrinogen III + 2 S-adenosyl-L-methionine = precorrin-2 + 2 S-adenosyl-L-homocysteine + H(+). It carries out the reaction precorrin-2 + NAD(+) = sirohydrochlorin + NADH + 2 H(+). It catalyses the reaction siroheme + 2 H(+) = sirohydrochlorin + Fe(2+). The protein operates within cofactor biosynthesis; adenosylcobalamin biosynthesis; precorrin-2 from uroporphyrinogen III: step 1/1. Its pathway is cofactor biosynthesis; adenosylcobalamin biosynthesis; sirohydrochlorin from precorrin-2: step 1/1. It participates in porphyrin-containing compound metabolism; siroheme biosynthesis; precorrin-2 from uroporphyrinogen III: step 1/1. It functions in the pathway porphyrin-containing compound metabolism; siroheme biosynthesis; siroheme from sirohydrochlorin: step 1/1. The protein operates within porphyrin-containing compound metabolism; siroheme biosynthesis; sirohydrochlorin from precorrin-2: step 1/1. Functionally, multifunctional enzyme that catalyzes the SAM-dependent methylations of uroporphyrinogen III at position C-2 and C-7 to form precorrin-2 via precorrin-1. Then it catalyzes the NAD-dependent ring dehydrogenation of precorrin-2 to yield sirohydrochlorin. Finally, it catalyzes the ferrochelation of sirohydrochlorin to yield siroheme. This Tolumonas auensis (strain DSM 9187 / NBRC 110442 / TA 4) protein is Siroheme synthase.